A 426-amino-acid chain; its full sequence is Limonoid 21-O-acetyltransferse (426 aa).

Catalysis depends on proton acceptor residues histidine 152 and aspartate 365.

It belongs to the plant acyltransferase family. Monomer. As to expression, expressed in maturing fruits and in juice vesicles.

It carries out the reaction isomeliandiol + acetyl-CoA = 21-O-acetyl-isomeliandiol + CoA. It functions in the pathway secondary metabolite biosynthesis; terpenoid biosynthesis. Acetyltransferase involved in the biosynthesis of limonoids triterpene natural products such as limonin, a compound with insecticidal activity responsible for the bitter taste in citrus. Catalyzes the formation of 21-O-acetyl-isomeliandiol from isomeliandiol. This Citrus sinensis (Sweet orange) protein is Limonoid 21-O-acetyltransferse.